The sequence spans 479 residues: Sucrose-6-phosphate hydrolase (479 aa).

Residues 44–47, Q63, 106–107, 166–167, and E223 each bind substrate; these read LLND, YS, and RD. D47 is a catalytic residue.

Belongs to the glycosyl hydrolase 32 family.

The protein resides in the cytoplasm. The catalysed reaction is Hydrolysis of terminal non-reducing beta-D-fructofuranoside residues in beta-D-fructofuranosides.. It participates in glycan biosynthesis; sucrose metabolism. This chain is Sucrose-6-phosphate hydrolase (scrB), found in Streptococcus mutans serotype c (strain ATCC 700610 / UA159).